The chain runs to 229 residues: Probable coenzyme A transferase subunit alpha (229 aa).

26-32 serves as a coordination point for CoA; that stretch reads GGFGGVG.

The protein belongs to the 3-oxoacid CoA-transferase subunit A family. In terms of assembly, heterodimer of a subunit alpha and a subunit beta.

The polypeptide is Probable coenzyme A transferase subunit alpha (yodS) (Bacillus subtilis (strain 168)).